The following is an 82-amino-acid chain: P2Y purinoceptor 2 (82 aa).

The chain crosses the membrane as a helical span at residues leucine 1–cysteine 25. Residues arginine 26 to threonine 35 are Cytoplasmic-facing. The chain crosses the membrane as a helical span at residues tyrosine 36–tyrosine 56. Residues tyrosine 57–arginine 75 lie on the Extracellular side of the membrane. Residues phenylalanine 76–leucine 82 form a helical membrane-spanning segment.

The protein belongs to the G-protein coupled receptor 1 family. As to expression, expressed in brain, heart, stria vascularis and vestibular labyrinth.

The protein localises to the cell membrane. Receptor for ATP and UTP coupled to G-proteins that activate a phosphatidylinositol-calcium second messenger system. Not activated by UDP. The sequence is that of P2Y purinoceptor 2 (P2RY2) from Meriones unguiculatus (Mongolian jird).